A 161-amino-acid polypeptide reads, in one-letter code: Protein-lysine N-methyltransferase (161 aa).

The DxGxGxG SAM-binding motif signature appears at 34–40; it reads DLGCGDG.

The protein belongs to the class I-like SAM-binding methyltransferase superfamily. As to quaternary structure, monomer.

It carries out the reaction L-lysyl-[protein] + S-adenosyl-L-methionine = N(6)-methyl-L-lysyl-[protein] + S-adenosyl-L-homocysteine + H(+). In terms of biological role, catalyzes the methylation of lysine residues in target proteins, using S-adenosyl-L-methionine (SAM) as the methyl donor. Exhibits broad substrate specificity, being able to methylate the crenarchaeal chromatin protein Cren7 primarily at 'Lys-11', 'Lys-16' and 'Lys-31', as well as a number of recombinant Sulfolobus proteins in vitro. Methylates lysine residues in a rather sequence-independent manner. This chain is Protein-lysine N-methyltransferase, found in Saccharolobus islandicus (strain REY15A) (Sulfolobus islandicus).